The primary structure comprises 318 residues: Protein-L-histidine N-pros-methyltransferase (318 aa).

Residues 1–18 form the signal peptide; sequence MRLLAGWLCLSLASVWLA. Asn35 is a glycosylation site (N-linked (GlcNAc...) asparagine). S-adenosyl-L-homocysteine is bound by residues Glu174, Asn210, and Tyr295.

The protein belongs to the METTL9 family.

Its subcellular location is the endoplasmic reticulum. It localises to the mitochondrion. It catalyses the reaction L-histidyl-[protein] + S-adenosyl-L-methionine = N(pros)-methyl-L-histidyl-[protein] + S-adenosyl-L-homocysteine + H(+). Protein-histidine N-methyltransferase that specifically catalyzes 1-methylhistidine (pros-methylhistidine) methylation of target proteins. Specifically methylates the second His of proteins with a His-x-His (HxH) motif (where 'x' is preferably a small amino acid), while exploiting the first one as a recognition signature. Catalyzes methylation of target proteins such as S100A9, NDUFB3, SLC39A5, SLC39A7, ARMC6 and DNAJB12; 1-methylhistidine modification may affect the binding of zinc and other metals to its target proteins. Constitutes the main methyltransferase for the 1-methylhistidine modification in cell. This chain is Protein-L-histidine N-pros-methyltransferase, found in Bos taurus (Bovine).